Here is a 543-residue protein sequence, read N- to C-terminus: Serendipity locus protein alpha (543 aa).

It is found in the cytoplasm. Its subcellular location is the cell membrane. Its function is as follows. Required for the cellularization of the syncytial blastoderm embryo. Involved in the localization of the actin filaments just prior to and during plasma membrane invagination. Sry-alpha together with nullo and bnk may provide auxiliary functions, by acting both to stabilize a large and dynamic microfilament structure and regulate its functions. The protein is Serendipity locus protein alpha (Sry-alpha) of Drosophila subobscura (Fruit fly).